The sequence spans 370 residues: MPALSLQQLQLINFRSYKCLTWDCRPGLNIIFGPNAAGKTNLLEAIGYLALARSFRQQQDQQLLTWGASSFQVRGLCHSNGEKIELVINYQQHNKRLTINGNRNRLIELLGIFPVIYFGPDDLHLLKGGPAYRRHFLDREISMGDRLYCRNLQDYRRILFQRNLLLRAIKAGRGKEGELEPWDIQLLATGKAICEKRSCFLQSLAPRVAATYRDMAGGEELALIYRPGVASQEEWAERLKVGREREVQAGMTLWGPHRDDFTFTLDGHEARYFASQGQQRAIVLALKLAEARYYRELLHVMPVLLLDDVFSELDEAHQGALLELLAGADQAFLTTTEVGLLPARLIQRSHLWELARGREPRLTSGPVEAQ.

33–40 contributes to the ATP binding site; the sequence is GPNAAGKT.

The protein belongs to the RecF family.

Its subcellular location is the cytoplasm. In terms of biological role, the RecF protein is involved in DNA metabolism; it is required for DNA replication and normal SOS inducibility. RecF binds preferentially to single-stranded, linear DNA. It also seems to bind ATP. In Moorella thermoacetica (strain ATCC 39073 / JCM 9320), this protein is DNA replication and repair protein RecF.